A 99-amino-acid polypeptide reads, in one-letter code: uncharacterized protein (99 aa).

This is an uncharacterized protein from Methanocaldococcus jannaschii (strain ATCC 43067 / DSM 2661 / JAL-1 / JCM 10045 / NBRC 100440) (Methanococcus jannaschii).